The chain runs to 429 residues: Adenylosuccinate synthetase (429 aa).

GTP contacts are provided by residues 12-18 and 40-42; these read GDEGKGK and GHT. The Proton acceptor role is filled by aspartate 13. Residues aspartate 13 and glycine 40 each contribute to the Mg(2+) site. IMP-binding positions include 13-16, 38-41, threonine 128, arginine 142, glutamine 223, threonine 238, and arginine 302; these read DEGK and NAGH. Catalysis depends on histidine 41, which acts as the Proton donor. 298 to 304 lines the substrate pocket; sequence VNTGRKR. GTP is bound by residues arginine 304, 330–332, and 412–414; these read KLD and GVG.

This sequence belongs to the adenylosuccinate synthetase family. As to quaternary structure, homodimer. The cofactor is Mg(2+).

It is found in the cytoplasm. The catalysed reaction is IMP + L-aspartate + GTP = N(6)-(1,2-dicarboxyethyl)-AMP + GDP + phosphate + 2 H(+). The protein operates within purine metabolism; AMP biosynthesis via de novo pathway; AMP from IMP: step 1/2. Its function is as follows. Plays an important role in the de novo pathway of purine nucleotide biosynthesis. Catalyzes the first committed step in the biosynthesis of AMP from IMP. The polypeptide is Adenylosuccinate synthetase (Corynebacterium glutamicum (strain R)).